Consider the following 302-residue polypeptide: MDTQAVRAYLLDLQDRITTAVGTLDGGTFVTDTWDKPPTERLRGSGRTCILENGAVLERGGVGFSHVMGDTLPPSATANRPELAGRGFEAMGVSLVFHPRNPYAPTVHMNVRCFVAQRPDAEPVWWFGGGMDLTPYYGFAEDAAHFHRTCKQALEPFGEELYPRFKQWCDDYFYLKHRKEARGVGGIFFDDFAELGFERSFEMMRAVGDALLPAWLPIAEQRHATPYGERERAFQAYRRGRYVEFNLVFDRGTLFGLQSGGRTESILMSMPPVANWRYDWQPEPGSPEAALYTDFLPARDWV.

Ser-94 contacts substrate. A divalent metal cation is bound by residues His-98 and His-108. The Proton donor role is filled by His-108. 110 to 112 (NVR) contacts substrate. His-147 and His-177 together coordinate a divalent metal cation. The important for dimerization stretch occupies residues 242–277 (YVEFNLVFDRGTLFGLQSGGRTESILMSMPPVANWR). 260 to 262 (GGR) contacts substrate.

The protein belongs to the aerobic coproporphyrinogen-III oxidase family. Homodimer. A divalent metal cation is required as a cofactor.

Its subcellular location is the cytoplasm. It catalyses the reaction coproporphyrinogen III + O2 + 2 H(+) = protoporphyrinogen IX + 2 CO2 + 2 H2O. The protein operates within porphyrin-containing compound metabolism; protoporphyrin-IX biosynthesis; protoporphyrinogen-IX from coproporphyrinogen-III (O2 route): step 1/1. Involved in the heme biosynthesis. Catalyzes the aerobic oxidative decarboxylation of propionate groups of rings A and B of coproporphyrinogen-III to yield the vinyl groups in protoporphyrinogen-IX. This is Oxygen-dependent coproporphyrinogen-III oxidase from Ralstonia nicotianae (strain ATCC BAA-1114 / GMI1000) (Ralstonia solanacearum).